The following is a 178-amino-acid chain: MRMHTRLQFLKRVSNVAYSHGQEQAKKEKVYKEMTQLKSQINRLCRPCPWDWTVFQGNCYFFSKFQQNWNDSVNACRKLDAQLVVIKSDDEQSFLQQTSKEKGYAWMGLSDLKHEGRWHWVDGSHLLFSFMKYWNKGEPNNEWEEDCAEFRGDGWNDAPCTIKKYWICKKSAMSCTEK.

A disulfide bridge links Cys48 with Cys59. One can recognise a C-type lectin domain in the interval 54–169 (VFQGNCYFFS…CTIKKYWICK (116 aa)). Residue Asn70 is glycosylated (N-linked (GlcNAc...) asparagine). 2 disulfide bridges follow: Cys76/Cys168 and Cys147/Cys160. Glu138, Asn140, Glu145, Asn156, and Asp157 together coordinate Ca(2+).

Probable pathogen-recognition receptor. May recognize in a calcium-dependent manner high mannose N-linked oligosaccharides in a variety of pathogen antigens. In Mus musculus (Mouse), this protein is CD209 antigen-like protein C (Cd209c).